Reading from the N-terminus, the 1104-residue chain is Lon protease homolog, mitochondrial (1104 aa).

The transit peptide at 1–58 (MLPLRAFARLAQRPRLSRPTQLARSSLPRPSPSRPAAHYLALAPAPSTRFLHSSPPVL) directs the protein to the mitochondrion. The segment at 8–144 (ARLAQRPRLS…PGAGGPKEVA (137 aa)) is disordered. Over residues 22 to 46 (LARSSLPRPSPSRPAAHYLALAPAP) the composition is skewed to low complexity. Residues 80–103 (KQDDQVEKPLPDAESSKSAEERAK) are compositionally biased toward basic and acidic residues. Low complexity predominate over residues 104-128 (SQSSKPDIKASSSDSVSSSAPAPGS). A compositionally biased stretch (gly residues) spans 129–139 (ADGGSPPGAGG). Residues 155-444 (VLAIPITHRP…RALVLLKKEL (290 aa)) enclose the Lon N-terminal domain. 597 to 604 (GPPGVGKT) is an ATP binding site. A Lon proteolytic domain is found at 895-1082 (SPPAGVSTGL…RQVLHEAFRG (188 aa)). Catalysis depends on residues S987 and K1030.

It belongs to the peptidase S16 family. In terms of assembly, homohexamer or homoheptamer. Organized in a ring with a central cavity.

It is found in the mitochondrion matrix. The enzyme catalyses Hydrolysis of proteins in presence of ATP.. Its function is as follows. ATP-dependent serine protease that mediates the selective degradation of misfolded, unassembled or oxidatively damaged polypeptides as well as certain short-lived regulatory proteins in the mitochondrial matrix. May also have a chaperone function in the assembly of inner membrane protein complexes. Participates in the regulation of mitochondrial gene expression and in the maintenance of the integrity of the mitochondrial genome. Binds to mitochondrial DNA in a site-specific manner. The polypeptide is Lon protease homolog, mitochondrial (Cryptococcus neoformans var. neoformans serotype D (strain B-3501A) (Filobasidiella neoformans)).